The following is a 511-amino-acid chain: AMP phosphorylase (511 aa).

AMP contacts are provided by residues glycine 168, 194–199 (SRAITS), and threonine 203. The Proton donor role is filled by aspartate 256. Residues serine 262 and lysine 286 each contribute to the AMP site.

This sequence belongs to the thymidine/pyrimidine-nucleoside phosphorylase family. Type 2 subfamily.

The catalysed reaction is AMP + phosphate = alpha-D-ribose 1,5-bisphosphate + adenine. It catalyses the reaction CMP + phosphate = cytosine + alpha-D-ribose 1,5-bisphosphate. The enzyme catalyses UMP + phosphate = alpha-D-ribose 1,5-bisphosphate + uracil. Functionally, catalyzes the conversion of AMP and phosphate to adenine and ribose 1,5-bisphosphate (R15P). Exhibits phosphorylase activity toward CMP and UMP in addition to AMP. Functions in an archaeal AMP degradation pathway, together with R15P isomerase and RubisCO. This is AMP phosphorylase from Thermofilum pendens (strain DSM 2475 / Hrk 5).